Here is a 164-residue protein sequence, read N- to C-terminus: Large ribosomal subunit protein uL10 (164 aa).

It belongs to the universal ribosomal protein uL10 family. In terms of assembly, part of the ribosomal stalk of the 50S ribosomal subunit. The N-terminus interacts with L11 and the large rRNA to form the base of the stalk. The C-terminus forms an elongated spine to which L12 dimers bind in a sequential fashion forming a multimeric L10(L12)X complex.

Its function is as follows. Forms part of the ribosomal stalk, playing a central role in the interaction of the ribosome with GTP-bound translation factors. This is Large ribosomal subunit protein uL10 from Helicobacter pylori (strain G27).